The sequence spans 142 residues: Glia maturation factor gamma (142 aa).

S2 carries the post-translational modification N-acetylserine. The ADF-H domain maps to 4–139 (SLVVCDVDPE…NETWLKEKLA (136 aa)).

It belongs to the actin-binding proteins ADF family. GMF subfamily. As to expression, expressed in rat thymus, testis, and spleen. Is present predominantly in proliferative and differentiative organs.

This Rattus norvegicus (Rat) protein is Glia maturation factor gamma (Gmfg).